We begin with the raw amino-acid sequence, 1652 residues long: Venom factor (1652 aa).

A signal peptide spans Met-1–Gly-22. 4 residues coordinate Mg(2+): Pro-519, Asp-542, Val-543, and Asp-545. Disulfide bonds link Cys-547–Cys-808, Cys-616–Cys-651, Cys-684–Cys-711, Cys-685–Cys-718, Cys-698–Cys-719, Cys-864–Cys-1502, Cys-1347–Cys-1478, Cys-1378–Cys-1447, Cys-1495–Cys-1500, Cys-1507–Cys-1579, Cys-1526–Cys-1650, and Cys-1626–Cys-1635. Residues Arg-657 to Ser-740 constitute a propeptide that is removed on maturation. The interval Arg-661–Arg-739 is C3a-like domain. In terms of domain architecture, Anaphylatoxin-like spans Cys-684–Cys-719. Residues Glu-743 to Ser-754 are factor B binding site. Residues His-992–Tyr-1270 constitute a propeptide that is removed on maturation. Residues His-992–Tyr-1270 are C3d-like domain. The segment at residues Cys-1000–Gln-1003 is a cross-link (isoglutamyl cysteine thioester (Cys-Gln)). Residues Val-1197–Thr-1260 are factor H binding site. The region spanning Cys-1507–Cys-1650 is the NTR domain.

It belongs to the venom complement C3 homolog family. In terms of assembly, heterotrimer of alpha, beta and gamma chains; disulfide-linked. Is active with factor B in the presence of factor D. Post-translationally, first processed by the removal of 4 Arg residues by furin-type protease, forming two chains, alpha and gamma/beta precursor, linked by a disulfide bond. Probably, a cobrin-like protease cleaves the C3a-like domain and then the C3d-like domain, generating the mature venom factor (VF). As to expression, expressed by the venom gland.

It localises to the secreted. In terms of biological role, complement-activating protein in venom. It is a structural and functional analog of complement component C3b, the activated form of C3. It binds factor B (CFB), which is subsequently cleaved by factor D (CFD) to form the bimolecular complex VF/Bb. VF/Bb is a C3/C5 convertase that cleaves both complement components C3 and C5. Structurally, it resembles the C3b degradation product C3c, which is not able to form a C3/C5 convertase. Unlike C3b/Bb, VF/Bb is a stable complex and completely resistant to the actions of complement regulatory factors H (CFH) and I (CFI). Therefore, VF continuously activates complement resulting in the depletion of complement activity. This Crotalus adamanteus (Eastern diamondback rattlesnake) protein is Venom factor.